The following is a 935-amino-acid chain: C-1-tetrahydrofolate synthase, cytoplasmic (935 aa).

Methionine 1 is subject to N-acetylmethionine. The tract at residues 2-291 (APAEILNGKE…MLMQSTVESA (290 aa)) is methylenetetrahydrofolate dehydrogenase and methenyltetrahydrofolate cyclohydrolase (D/C) domain. Substrate-binding positions include 52-56 (YINVK) and 99-101 (VQL). The active site involves lysine 56. Residues 172–174 (GRS) and serine 197 contribute to the NADP(+) site. 272-276 (PGGVG) contributes to the substrate binding site. The tract at residues 310–935 (LNLKTPVPSD…PETEQVNGLF (626 aa)) is formyltetrahydrofolate synthetase domain. Position 318 is a phosphoserine (serine 318). ATP is bound at residue 380-387 (TPLGEGKS). Residues serine 413 and serine 490 each carry the phosphoserine modification.

This sequence in the N-terminal section; belongs to the tetrahydrofolate dehydrogenase/cyclohydrolase family. In the C-terminal section; belongs to the formate--tetrahydrofolate ligase family. Homodimer. In terms of tissue distribution, ubiquitous.

It is found in the cytoplasm. The enzyme catalyses (6R)-5,10-methylene-5,6,7,8-tetrahydrofolate + NADP(+) = (6R)-5,10-methenyltetrahydrofolate + NADPH. It carries out the reaction (6R)-5,10-methenyltetrahydrofolate + H2O = (6R)-10-formyltetrahydrofolate + H(+). The catalysed reaction is (6S)-5,6,7,8-tetrahydrofolate + formate + ATP = (6R)-10-formyltetrahydrofolate + ADP + phosphate. The protein operates within one-carbon metabolism; tetrahydrofolate interconversion. In terms of biological role, trifunctional enzyme that catalyzes the interconversion of three forms of one-carbon-substituted tetrahydrofolate: (6R)-5,10-methylene-5,6,7,8-tetrahydrofolate, 5,10-methenyltetrahydrofolate and (6S)-10-formyltetrahydrofolate. These derivatives of tetrahydrofolate are differentially required in nucleotide and amino acid biosynthesis, (6S)-10-formyltetrahydrofolate being required for purine biosynthesis while (6R)-5,10-methylene-5,6,7,8-tetrahydrofolate is used for serine and methionine biosynthesis for instance. The protein is C-1-tetrahydrofolate synthase, cytoplasmic (MTHFD1) of Homo sapiens (Human).